A 458-amino-acid chain; its full sequence is NADH-quinone oxidoreductase subunit N (458 aa).

A run of 14 helical transmembrane segments spans residues 2 to 22 (LLLLPEITLTLIALLGQFFAV), 30 to 50 (IISNIIILLCILSIFLTFKYS), 62 to 82 (GINIGISKSIVLLFTIISMII), 94 to 114 (LKFEFITLMLLSVVGIFVAIS), 118 to 138 (FLLLFCGMELTALTSYALAGF), 153 to 173 (FILGSLVSCLSLFGISFIYGF), 194 to 214 (LGLIIGIILFLSSIFFKLSSV), 235 to 255 (FNAASKIGMVIVLLNISKLII), 261 to 281 (INYNLIKIIAILSMLFGAFGA), 290 to 310 (LMAYSTILNIGYVLIGVLLHN), 318 to 338 (LLYMLIYAVGSIGFFTCLIIL), 361 to 381 (IAAVISIVMFSMIGIPPLTGF), 397 to 417 (FALAYCGIFTSVVAAFYYLKV), and 438 to 458 (LLLINYLVVGFLLLGSFIISF).

It belongs to the complex I subunit 2 family. In terms of assembly, NDH-1 is composed of 14 different subunits. Subunits NuoA, H, J, K, L, M, N constitute the membrane sector of the complex.

The protein resides in the cell inner membrane. The catalysed reaction is a quinone + NADH + 5 H(+)(in) = a quinol + NAD(+) + 4 H(+)(out). Its function is as follows. NDH-1 shuttles electrons from NADH, via FMN and iron-sulfur (Fe-S) centers, to quinones in the respiratory chain. The immediate electron acceptor for the enzyme in this species is believed to be ubiquinone. Couples the redox reaction to proton translocation (for every two electrons transferred, four hydrogen ions are translocated across the cytoplasmic membrane), and thus conserves the redox energy in a proton gradient. The sequence is that of NADH-quinone oxidoreductase subunit N from Rickettsia conorii (strain ATCC VR-613 / Malish 7).